A 569-amino-acid chain; its full sequence is Interleukin-1 receptor type 1 (569 aa).

An N-terminal signal peptide occupies residues 1-17 (MKVLLRLICFIALLISS). The Extracellular segment spans residues 18–336 (LEADKCKERE…LIYPVTNFQK (319 aa)). Disulfide bonds link Cys-23–Cys-104, Cys-44–Cys-96, Cys-121–Cys-164, and Cys-142–Cys-196. Ig-like C2-type domains are found at residues 23 to 110 (CKER…IKIS), 118 to 210 (PNLC…YPIT), and 226 to 328 (PVIV…IQLI). Asn-100 carries N-linked (GlcNAc...) asparagine glycosylation. Asn-193, Asn-233, Asn-249, Asn-263, and Asn-297 each carry an N-linked (GlcNAc...) asparagine glycan. Cys-248 and Cys-312 are joined by a disulfide. The helical transmembrane segment at 337 to 356 (HMIGICVTLTVIIVCSVFIY) threads the bilayer. The Cytoplasmic segment spans residues 357 to 569 (KIFKIDIVLW…LQREAHVPLG (213 aa)). Residues 383-538 (KTYDAYILYP…RFWKNVRYHM (156 aa)) form the TIR domain. Glu-470 is a catalytic residue. Tyr-496 bears the Phosphotyrosine mark. Residues 540-569 (VQRRSPSSKHQLLSPATKEKLQREAHVPLG) are disordered. Basic and acidic residues predominate over residues 556–569 (TKEKLQREAHVPLG).

It belongs to the interleukin-1 receptor family. The interleukin-1 receptor complex is a heterodimer of IL1R1 and IL1RAP. Interacts with PIK3R1. Interacts with IL1A. Post-translationally, a soluble form (sIL1R1) is probably produced by proteolytic cleavage at the cell surface (shedding). In terms of processing, rapidly phosphorylated on Tyr-496 in response to IL-1, which creates a SH2 binding site for the PI 3-kinase regulatory subunit PIK3R1. Expressed in T-helper cell subsets. Preferentially expressed in T-helper 1 (Th1) cells.

It localises to the membrane. Its subcellular location is the cell membrane. It is found in the secreted. It catalyses the reaction NAD(+) + H2O = ADP-D-ribose + nicotinamide + H(+). Receptor for IL1A, IL1B and IL1RN. After binding to interleukin-1 associates with the coreceptor IL1RAP to form the high affinity interleukin-1 receptor complex which mediates interleukin-1-dependent activation of NF-kappa-B, MAPK and other pathways. Signaling involves the recruitment of adapter molecules such as TOLLIP, MYD88, and IRAK1 or IRAK2 via the respective TIR domains of the receptor/coreceptor subunits. Binds ligands with comparable affinity and binding of antagonist IL1RN prevents association with IL1RAP to form a signaling complex. Involved in IL1B-mediated costimulation of IFNG production from T-helper 1 (Th1) cells. The sequence is that of Interleukin-1 receptor type 1 (IL1R1) from Homo sapiens (Human).